The sequence spans 181 residues: Extracellular superoxide dismutase [Cu-Zn] (181 aa).

The first 18 residues, 1 to 18, serve as a signal peptide directing secretion; sequence MMQYLVVSLALCATICSA. N-linked (GlcNAc...) asparagine glycosylation occurs at N46. Cu cation contacts are provided by H75, H77, and H92. A disulfide bridge connects residues C86 and C175. The Zn(2+) site is built by H92, H100, H109, and D112. N119 carries an N-linked (GlcNAc...) asparagine glycan. H149 provides a ligand contact to Cu cation. N159 carries N-linked (GlcNAc...) asparagine glycosylation.

Belongs to the Cu-Zn superoxide dismutase family. It depends on Cu cation as a cofactor. Zn(2+) serves as cofactor. Expressed at higher levels in females compared to males.

Its subcellular location is the secreted. The enzyme catalyses 2 superoxide + 2 H(+) = H2O2 + O2. Protects the extracellular space from the toxic effects of reactive oxygen intermediates by converting superoxide radicals into hydrogen peroxide and oxygen. This Drosophila melanogaster (Fruit fly) protein is Extracellular superoxide dismutase [Cu-Zn].